We begin with the raw amino-acid sequence, 1226 residues long: Double-stranded RNA-specific adenosine deaminase (1226 aa).

The residue at position 26 (Arg-26) is an Asymmetric dimethylarginine. A Z-binding 1 domain is found at 133–199; it reads LSIYQDQEQR…GTPPLWKIAV (67 aa). The tract at residues 133-202 is interaction with Z-DNA; the sequence is LSIYQDQEQR…PLWKIAVSTQ (70 aa). Disordered regions lie at residues 208–238 and 258–286; these read SGVV…TSVS and GVVR…STSA. The residue at position 285 (Ser-285) is a Phosphoserine. In terms of domain architecture, Z-binding 2 spans 293-357; the sequence is FLDMAEIKEK…TTPPIWHLTD (65 aa). Residues Lys-384 and Lys-408 each participate in a glycyl lysine isopeptide (Lys-Gly) (interchain with G-Cter in SUMO2) cross-link. Residue Lys-418 forms a Glycyl lysine isopeptide (Lys-Gly) (interchain with G-Cter in SUMO); alternate linkage. A Glycyl lysine isopeptide (Lys-Gly) (interchain with G-Cter in SUMO1); alternate cross-link involves residue Lys-418. A Glycyl lysine isopeptide (Lys-Gly) (interchain with G-Cter in SUMO2); alternate cross-link involves residue Lys-418. Ser-481 bears the Phosphoserine mark. Positions 503 to 571 constitute a DRBM 1 domain; the sequence is NPISGLLEYA…AMKAMTILLE (69 aa). Over residues 574-597 the composition is skewed to basic and acidic residues; that stretch reads KAKDSGKSEESSHYSTEKESEKTA. The segment at 574–610 is disordered; the sequence is KAKDSGKSEESSHYSTEKESEKTAESQTPTPSATSFF. Residue Lys-580 forms a Glycyl lysine isopeptide (Lys-Gly) (interchain with G-Cter in SUMO2) linkage. Residues 600–610 are compositionally biased toward polar residues; it reads QTPTPSATSFF. 2 positions are modified to phosphothreonine: Thr-601 and Thr-603. Residues Ser-614, Ser-629, and Ser-636 each carry the phosphoserine modification. Positions 614-682 constitute a DRBM 2 domain; the sequence is SPVTTLLECM…AEEAMKALHG (69 aa). The segment at 716–725 is N-terminal extension of DRBM 3 and constituent of a bi-partite nuclear localization signal; the sequence is IGELVRYLNT. The region spanning 726–794 is the DRBM 3 domain; sequence NPVGGLLEYA…ADAALRVLIG (69 aa). Positions 795–801 are C-terminal extension of DRBM 3 and constituent of a bi-partite nuclear localization signal; the sequence is ENEKAER. Thr-808 bears the Phosphothreonine mark. Ser-814, Ser-823, and Ser-825 each carry phosphoserine. A Glycyl lysine isopeptide (Lys-Gly) (interchain with G-Cter in SUMO2) cross-link involves residue Lys-875. Residues 886-1221 enclose the A to I editase domain; the sequence is SLGTGNRCVK…ISKPQEEKNF (336 aa). His-910 lines the Zn(2+) pocket. The Proton donor role is filled by Glu-912. Zn(2+)-binding residues include Cys-966 and Cys-1036.

As to quaternary structure, homodimer. Homodimerization is essential for its catalytic activity. Isoform 5 can form heterodimers with ADARB1/ADAR2. Isoform 1 interacts with ILF2/NF45 and ILF3/NF90. Binding to ILF3/NF90 up-regulates ILF3-mediated gene expression. Isoform 1 and isoform 5 (via DRBM 3 domain) interact with TNPO1. Isoform 5 (via DRBM domains) interacts with XPO5. Isoform 1 and isoform 5 can interact with EIF2AK2/PKR and UPF1. Sumoylation reduces RNA-editing activity. As to expression, ubiquitously expressed, highest levels were found in brain and lung. Isoform 5 is expressed at higher levels in astrocytomas as compared to normal brain tissue and expression increases strikingly with the severity of the tumor, being higher in the most aggressive tumors.

Its subcellular location is the cytoplasm. It is found in the nucleus. The protein resides in the nucleolus. It carries out the reaction adenosine in double-stranded RNA + H2O + H(+) = inosine in double-stranded RNA + NH4(+). In terms of biological role, catalyzes the hydrolytic deamination of adenosine to inosine in double-stranded RNA (dsRNA) referred to as A-to-I RNA editing. This may affect gene expression and function in a number of ways that include mRNA translation by changing codons and hence the amino acid sequence of proteins since the translational machinery read the inosine as a guanosine; pre-mRNA splicing by altering splice site recognition sequences; RNA stability by changing sequences involved in nuclease recognition; genetic stability in the case of RNA virus genomes by changing sequences during viral RNA replication; and RNA structure-dependent activities such as microRNA production or targeting or protein-RNA interactions. Can edit both viral and cellular RNAs and can edit RNAs at multiple sites (hyper-editing) or at specific sites (site-specific editing). Its cellular RNA substrates include: bladder cancer-associated protein (BLCAP), neurotransmitter receptors for glutamate (GRIA2) and serotonin (HTR2C) and GABA receptor (GABRA3). Site-specific RNA editing of transcripts encoding these proteins results in amino acid substitutions which consequently alters their functional activities. Exhibits low-level editing at the GRIA2 Q/R site, but edits efficiently at the R/G site and HOTSPOT1. Its viral RNA substrates include: hepatitis C virus (HCV), vesicular stomatitis virus (VSV), measles virus (MV), hepatitis delta virus (HDV), and human immunodeficiency virus type 1 (HIV-1). Exhibits either a proviral (HDV, MV, VSV and HIV-1) or an antiviral effect (HCV) and this can be editing-dependent (HDV and HCV), editing-independent (VSV and MV) or both (HIV-1). Impairs HCV replication via RNA editing at multiple sites. Enhances the replication of MV, VSV and HIV-1 through an editing-independent mechanism via suppression of EIF2AK2/PKR activation and function. Stimulates both the release and infectivity of HIV-1 viral particles by an editing-dependent mechanism where it associates with viral RNAs and edits adenosines in the 5'UTR and the Rev and Tat coding sequence. Can enhance viral replication of HDV via A-to-I editing at a site designated as amber/W, thereby changing an UAG amber stop codon to an UIG tryptophan (W) codon that permits synthesis of the large delta antigen (L-HDAg) which has a key role in the assembly of viral particles. However, high levels of ADAR1 inhibit HDV replication. The chain is Double-stranded RNA-specific adenosine deaminase (ADAR) from Homo sapiens (Human).